The following is a 129-amino-acid chain: Phosphoribosyl-AMP cyclohydrolase (129 aa).

Asp-76 is a binding site for Mg(2+). Position 77 (Cys-77) interacts with Zn(2+). Mg(2+)-binding residues include Asp-78 and Asp-80. Zn(2+)-binding residues include Cys-97 and Cys-104.

It belongs to the PRA-CH family. As to quaternary structure, homodimer. The cofactor is Mg(2+). Zn(2+) serves as cofactor.

It localises to the cytoplasm. The enzyme catalyses 1-(5-phospho-beta-D-ribosyl)-5'-AMP + H2O = 1-(5-phospho-beta-D-ribosyl)-5-[(5-phospho-beta-D-ribosylamino)methylideneamino]imidazole-4-carboxamide. Its pathway is amino-acid biosynthesis; L-histidine biosynthesis; L-histidine from 5-phospho-alpha-D-ribose 1-diphosphate: step 3/9. Catalyzes the hydrolysis of the adenine ring of phosphoribosyl-AMP. This is Phosphoribosyl-AMP cyclohydrolase from Polaromonas sp. (strain JS666 / ATCC BAA-500).